Reading from the N-terminus, the 272-residue chain is Putative phosphoenolpyruvate synthase regulatory protein (272 aa).

152 to 159 (GVSRCGKT) contributes to the ADP binding site.

It belongs to the pyruvate, phosphate/water dikinase regulatory protein family. PSRP subfamily.

The catalysed reaction is [pyruvate, water dikinase] + ADP = [pyruvate, water dikinase]-phosphate + AMP + H(+). It carries out the reaction [pyruvate, water dikinase]-phosphate + phosphate + H(+) = [pyruvate, water dikinase] + diphosphate. Its function is as follows. Bifunctional serine/threonine kinase and phosphorylase involved in the regulation of the phosphoenolpyruvate synthase (PEPS) by catalyzing its phosphorylation/dephosphorylation. The sequence is that of Putative phosphoenolpyruvate synthase regulatory protein from Pseudomonas fluorescens (strain ATCC BAA-477 / NRRL B-23932 / Pf-5).